Here is a 373-residue protein sequence, read N- to C-terminus: Plasmepsin VIII (373 aa).

The first 21 residues, 1 to 21, serve as a signal peptide directing secretion; the sequence is MNKFFVFPLLLILNSIVLVKS. In terms of domain architecture, Peptidase A1 spans 50–370; that stretch reads FIGEISIGNP…EKDNMRIGLA (321 aa). Residues Asp68 and Asp258 contribute to the active site.

The protein belongs to the peptidase A1 family.

In terms of biological role, during the development in the mosquito vector, plays an essential role in sporozoite egress from the oocyst and sporozoite gliding motility, which is required for the invasion of salivary glands and subsequent transmission to the host. This is Plasmepsin VIII from Plasmodium berghei (strain Anka).